Consider the following 103-residue polypeptide: Large ribosomal subunit protein bL21 (103 aa).

Belongs to the bacterial ribosomal protein bL21 family. As to quaternary structure, part of the 50S ribosomal subunit. Contacts protein L20.

In terms of biological role, this protein binds to 23S rRNA in the presence of protein L20. The chain is Large ribosomal subunit protein bL21 from Shewanella piezotolerans (strain WP3 / JCM 13877).